Consider the following 398-residue polypeptide: Putative F-box protein At4g17780 (398 aa).

Residues 8 to 55 (PSSIYIVADLLEDIFLRLPLKSILISKSVSKRWRSILESKTFVERRMS) enclose the F-box domain.

The sequence is that of Putative F-box protein At4g17780 from Arabidopsis thaliana (Mouse-ear cress).